The following is a 1433-amino-acid chain: DNA-directed RNA polymerase subunit beta' (1433 aa).

Residues cysteine 66, cysteine 68, cysteine 81, and cysteine 84 each coordinate Zn(2+). 3 residues coordinate Mg(2+): aspartate 474, aspartate 476, and aspartate 478. 4 residues coordinate Zn(2+): cysteine 823, cysteine 897, cysteine 904, and cysteine 907.

It belongs to the RNA polymerase beta' chain family. As to quaternary structure, the RNAP catalytic core consists of 2 alpha, 1 beta, 1 beta' and 1 omega subunit. When a sigma factor is associated with the core the holoenzyme is formed, which can initiate transcription. Mg(2+) is required as a cofactor. It depends on Zn(2+) as a cofactor.

It carries out the reaction RNA(n) + a ribonucleoside 5'-triphosphate = RNA(n+1) + diphosphate. DNA-dependent RNA polymerase catalyzes the transcription of DNA into RNA using the four ribonucleoside triphosphates as substrates. This chain is DNA-directed RNA polymerase subunit beta', found in Amoebophilus asiaticus (strain 5a2).